The following is a 323-amino-acid chain: Breast cancer metastasis-suppressor 1-like protein-A (323 aa).

Over residues 1–15 the composition is skewed to basic and acidic residues; that stretch reads MPVHSREKKESNHEE. A disordered region spans residues 1-52; sequence MPVHSREKKESNHEEMEVDFAEQEGSSSEDEDTESSSVSEDGESSEMDDEDC. The segment covering 16 to 51 has biased composition (acidic residues); sequence MEVDFAEQEGSSSEDEDTESSSVSEDGESSEMDDED. 2 coiled-coil regions span residues 50 to 81 and 156 to 178; these read EDCE…YKER and QTEL…ITSE.

Belongs to the BRMS1 family.

The protein resides in the nucleus. Involved in the histone deacetylase (HDAC1)-dependent transcriptional repression activity. The sequence is that of Breast cancer metastasis-suppressor 1-like protein-A (brms1la) from Danio rerio (Zebrafish).